The chain runs to 128 residues: Saitohin (128 aa).

The segment at 77–128 (SYSSEESSRNGAEQGRQLSIEGPFQGQNCPSHPAAALPLPMRGESQATSCQV) is disordered.

Interacts with PRDX6. As to expression, highest expression in placenta, muscle, fetal brain, and adult brain, with lower expression in heart, kidney, stomach, testis, and adrenal gland. In the central nervous system, highest expression is in temporal lobe, hypothalamus, medulla and spinal cord, with lower expression in other brain regions.

The protein localises to the cytoplasm. The protein resides in the nucleus. This Homo sapiens (Human) protein is Saitohin (STH).